Reading from the N-terminus, the 551-residue chain is Probable CoA ligase CCL5 (551 aa).

Residues 204–212, 345–350, Asp431, 443–446, and Lys537 each bind ATP; these read SSGTTGASK, QGYGLT, and VVDR. The segment at 274–345 is SBD1; sequence EIHEMLSAIE…ENYPTVSILQ (72 aa). The interval 346–410 is SBD2; sequence GYGLTESTGI…LRGPTIMKGY (65 aa).

It belongs to the ATP-dependent AMP-binding enzyme family. As to expression, mostly expressed at low levels in glandular trichomes (lupulin glands) after flowering, and, to a lower extent, in stems, leaves, cones and flowers.

It is found in the cytoplasm. The protein localises to the cytosol. The chain is Probable CoA ligase CCL5 from Humulus lupulus (European hop).